The sequence spans 443 residues: Tubulin beta chain (443 aa).

Residues Q11, E69, S138, G142, T143, G144, N204, and N226 each coordinate GTP. Position 69 (E69) interacts with Mg(2+). The segment at 424–443 is disordered; sequence QYQDATAEEEGEFEEEEGEN. Positions 429–443 are enriched in acidic residues; that stretch reads TAEEEGEFEEEEGEN.

The protein belongs to the tubulin family. As to quaternary structure, dimer of alpha and beta chains. A typical microtubule is a hollow water-filled tube with an outer diameter of 25 nm and an inner diameter of 15 nM. Alpha-beta heterodimers associate head-to-tail to form protofilaments running lengthwise along the microtubule wall with the beta-tubulin subunit facing the microtubule plus end conferring a structural polarity. Microtubules usually have 13 protofilaments but different protofilament numbers can be found in some organisms and specialized cells. Mg(2+) serves as cofactor. Post-translationally, some glutamate residues at the C-terminus are either polyglutamylated or polyglycylated. These 2 modifications occur exclusively on glutamate residues and result in either polyglutamate or polyglycine chains on the gamma-carboxyl group. Both modifications can coexist on the same protein on adjacent residues, and lowering polyglycylation levels increases polyglutamylation, and reciprocally. The precise function of such modifications is still unclear but they regulate the assembly and dynamics of axonemal microtubules.

The protein resides in the cytoplasm. The protein localises to the cytoskeleton. Functionally, tubulin is the major constituent of microtubules, a cylinder consisting of laterally associated linear protofilaments composed of alpha- and beta-tubulin heterodimers. Microtubules grow by the addition of GTP-tubulin dimers to the microtubule end, where a stabilizing cap forms. Below the cap, tubulin dimers are in GDP-bound state, owing to GTPase activity of alpha-tubulin. This chain is Tubulin beta chain (BTU1), found in Tetrahymena thermophila.